We begin with the raw amino-acid sequence, 134 residues long: Profilin-5 (134 aa).

A disulfide bridge links Cys13 with Cys118. An Involved in PIP2 interaction motif is present at residues 84–100 (AVIRGKKGSGGITIKKT). At Thr114 the chain carries Phosphothreonine.

Belongs to the profilin family. As to quaternary structure, occurs in many kinds of cells as a complex with monomeric actin in a 1:1 ratio. In terms of processing, phosphorylated by MAP kinases.

Its subcellular location is the cytoplasm. The protein localises to the cytoskeleton. Functionally, binds to actin and affects the structure of the cytoskeleton. At high concentrations, profilin prevents the polymerization of actin, whereas it enhances it at low concentrations. The chain is Profilin-5 from Olea europaea (Common olive).